The sequence spans 380 residues: Pregnancy-associated glycoprotein 6 (380 aa).

The first 15 residues, 1 to 15, serve as a signal peptide directing secretion; the sequence is MKWLVLLGLVSISEC. A propeptide spans 16–53 (activation peptide); the sequence is IVKIPLRRVKTMRKTLSEKNMLNNFLKEHAYRLSQISF. N-linked (GlcNAc...) asparagine glycosylation is found at Asn57 and Asn74. The Peptidase A1 domain occupies 71–377; it reads YLGNITIGTP…DRGHDRIGLA (307 aa). Asp89 is a catalytic residue. Cys102 and Cys107 are disulfide-bonded. N-linked (GlcNAc...) asparagine glycosylation occurs at Asn125. Cys261 and Cys265 are disulfide-bonded. Asp270 is a catalytic residue. Cys303 and Cys337 are joined by a disulfide.

It belongs to the peptidase A1 family. Trophoblast and placental tissue. Produced specifically in the invasive binucleate cells of the placenta.

The protein resides in the secreted. The protein localises to the extracellular space. The polypeptide is Pregnancy-associated glycoprotein 6 (Ovis aries (Sheep)).